The chain runs to 155 residues: Endoribonuclease YbeY (155 aa).

Zn(2+) is bound by residues His117, His121, and His127.

It belongs to the endoribonuclease YbeY family. Zn(2+) is required as a cofactor.

The protein localises to the cytoplasm. Its function is as follows. Single strand-specific metallo-endoribonuclease involved in late-stage 70S ribosome quality control and in maturation of the 3' terminus of the 16S rRNA. The sequence is that of Endoribonuclease YbeY from Dichelobacter nodosus (strain VCS1703A).